The primary structure comprises 65 residues: Large ribosomal subunit protein uL29 (65 aa).

Belongs to the universal ribosomal protein uL29 family.

The polypeptide is Large ribosomal subunit protein uL29 (Acinetobacter baumannii (strain AB307-0294)).